We begin with the raw amino-acid sequence, 122 residues long: U1 small nuclear ribonucleoprotein C (122 aa).

The segment at 4–36 (YFCDYCDTYLTHDSPSVRKTHCSGRKHKDNVKM) adopts a Matrin-type zinc-finger fold.

The protein belongs to the U1 small nuclear ribonucleoprotein C family. As to quaternary structure, U1 snRNP is composed of the 7 core Sm proteins B/B', D1, D2, D3, E, F and G that assemble in a heptameric protein ring on the Sm site of the small nuclear RNA to form the core snRNP, and at least 3 U1 snRNP-specific proteins U1-70K, U1-A and U1-C. U1-C interacts with U1 snRNA and the 5' splice-site region of the pre-mRNA.

It is found in the nucleus. Functionally, component of the spliceosomal U1 snRNP, which is essential for recognition of the pre-mRNA 5' splice-site and the subsequent assembly of the spliceosome. U1-C is directly involved in initial 5' splice-site recognition for both constitutive and regulated alternative splicing. The interaction with the 5' splice-site seems to precede base-pairing between the pre-mRNA and the U1 snRNA. Stimulates commitment or early (E) complex formation by stabilizing the base pairing of the 5' end of the U1 snRNA and the 5' splice-site region. In Ciona intestinalis (Transparent sea squirt), this protein is U1 small nuclear ribonucleoprotein C.